Here is a 266-residue protein sequence, read N- to C-terminus: Thymidylate synthase (266 aa).

Residue arginine 24 participates in dUMP binding. Histidine 54 contributes to the (6R)-5,10-methylene-5,6,7,8-tetrahydrofolate binding site. 129–130 provides a ligand contact to dUMP; the sequence is RR. Cysteine 149 (nucleophile) is an active-site residue. Residues 169–172, asparagine 180, and 210–212 each bind dUMP; these read RSAD and HIY. Aspartate 172 contacts (6R)-5,10-methylene-5,6,7,8-tetrahydrofolate. Residue alanine 265 participates in (6R)-5,10-methylene-5,6,7,8-tetrahydrofolate binding.

This sequence belongs to the thymidylate synthase family. Bacterial-type ThyA subfamily. In terms of assembly, homodimer.

Its subcellular location is the cytoplasm. It catalyses the reaction dUMP + (6R)-5,10-methylene-5,6,7,8-tetrahydrofolate = 7,8-dihydrofolate + dTMP. Its pathway is pyrimidine metabolism; dTTP biosynthesis. Functionally, catalyzes the reductive methylation of 2'-deoxyuridine-5'-monophosphate (dUMP) to 2'-deoxythymidine-5'-monophosphate (dTMP) while utilizing 5,10-methylenetetrahydrofolate (mTHF) as the methyl donor and reductant in the reaction, yielding dihydrofolate (DHF) as a by-product. This enzymatic reaction provides an intracellular de novo source of dTMP, an essential precursor for DNA biosynthesis. The polypeptide is Thymidylate synthase (Mycobacterium ulcerans (strain Agy99)).